Consider the following 64-residue polypeptide: Long neurotoxin MS2 (64 aa).

Disulfide bonds link cysteine 3-cysteine 24, cysteine 6-cysteine 11, cysteine 17-cysteine 41, cysteine 45-cysteine 57, and cysteine 58-cysteine 63.

The protein belongs to the three-finger toxin family. Ancestral subfamily. In terms of tissue distribution, expressed by the venom gland.

It is found in the secreted. Functionally, produces peripheral paralysis by blocking neuromuscular transmission at the postsynaptic site. Very weak inhibitor of the endogenous nicotinic acetylcholine receptors (nAChR) in the human rhabdomyosarcoma TE 671 cell line. Not toxic to mice by intraperitoneal injection or to zebrafish by injection at the back of the dorsolateral region. The sequence is that of Long neurotoxin MS2 from Micrurus surinamensis (Surinam coral snake).